We begin with the raw amino-acid sequence, 263 residues long: Small ribosomal subunit protein uS2 (263 aa).

Positions 228-263 (QLEEPEADLADEDDNGMTTSDDGDAEALDIPDDSDA) are disordered. Over residues 230–263 (EEPEADLADEDDNGMTTSDDGDAEALDIPDDSDA) the composition is skewed to acidic residues.

It belongs to the universal ribosomal protein uS2 family.

The protein is Small ribosomal subunit protein uS2 of Thermosynechococcus vestitus (strain NIES-2133 / IAM M-273 / BP-1).